The sequence spans 223 residues: UPF0441 protein KPK_0672 (223 aa).

The segment at 165-223 is disordered; it reads SYGAAQPGRTMNVPKTAMAPKPATTTTVTRGGFGESVAKQSTMQRSAAGSTSSSRSMGG. Low complexity-rich tracts occupy residues 177–193 and 209–223; these read VPKTAMAPKPATTTTVT and RSAAGSTSSSRSMGG.

This sequence belongs to the UPF0441 family.

This is UPF0441 protein KPK_0672 from Klebsiella pneumoniae (strain 342).